The following is a 661-amino-acid chain: MFMRYIMVEEQTLKTGSQELEEKADYNMRYYAHLMKLSKEKPAEFWGSLAQDLLDWYEPWKETMRQEDPMTRWFIGGKINASYNAVDRHLNGPRKFKAAVIWESELGERKIVTYQDMFYEVNRWANALRSLGVGKGDRVTIYMPLTPEGIAAMLASARIGAIHSVIFAGFGSQAIADRVEDAKAKVVITADAYPRRGKVVELKKTVDEALNSLGERSPVQHVLVYRRMKTDVNMKEGRDVFFDEVGKYRYVEPERMDSNDPLFILYTSGTTGKPKGIMHSTGGYLTGTAVMLLWSYGLSQENDVLFNTSDIGWIVGHSYITYSPLIMGRTVVIYESAPDYPYPDKWAEIIERYRATTFGTSATALRYFMKYGDEYVKNHDLSSIRIIVTNGEVLNYSPWKWGLEVLGGGKVFMSHQWWQTETGAPNLGYLPGIIYMPMKSGPASGFPLPGNFVEVLDENGNPSAPRVRGYLVMRPPFPPNMMMGMWNDNGERLKKTYFSKFGSLYYPGDFAMVDEDGYIWVLGRADETLKIAAHRIGAGEVESAITSHPSVAEAAVIGVPDSVKGEEVHAFVVLKQGYAPSSELAKDIQSHVRKVMGPIVSPQIHFVDKLPKTRSGKVMRRVIKAVMMGSSAGDLTTIEDEASMDEIKKAVEELKKELKTS.

Asp526 is a catalytic residue. N6-acetyllysine is present on Lys617.

The protein belongs to the ATP-dependent AMP-binding enzyme family. Homotetramer.

It carries out the reaction 3-hydroxypropanoate + ATP + CoA = 3-hydroxypropanoyl-CoA + AMP + diphosphate. In terms of biological role, plays a role in the autotrophic CO(2) fixation pathway. Activates 3-hydroxypropionate to its CoA ester. Can also activate propionate, and to a lesser extent acrylate, acetate and butyrate. The polypeptide is 3-hydroxypropionyl-coenzyme A synthetase (Metallosphaera sedula (strain ATCC 51363 / DSM 5348 / JCM 9185 / NBRC 15509 / TH2)).